The sequence spans 482 residues: tRNA-2-methylthio-N(6)-dimethylallyladenosine synthase (482 aa).

Positions 3–120 (KKLHIKTWGC…LPEMIKQVQG (118 aa)) constitute an MTTase N-terminal domain. The [4Fe-4S] cluster site is built by C12, C49, C83, C158, C162, and C165. A Radical SAM core domain is found at 144–376 (KADGPSAFVS…QNRITQMAQQ (233 aa)). Residues 379 to 442 (RQMFDTEQRI…PNSLRGDLIR (64 aa)) enclose the TRAM domain.

It belongs to the methylthiotransferase family. MiaB subfamily. As to quaternary structure, monomer. [4Fe-4S] cluster is required as a cofactor.

It localises to the cytoplasm. The catalysed reaction is N(6)-dimethylallyladenosine(37) in tRNA + (sulfur carrier)-SH + AH2 + 2 S-adenosyl-L-methionine = 2-methylsulfanyl-N(6)-dimethylallyladenosine(37) in tRNA + (sulfur carrier)-H + 5'-deoxyadenosine + L-methionine + A + S-adenosyl-L-homocysteine + 2 H(+). In terms of biological role, catalyzes the methylthiolation of N6-(dimethylallyl)adenosine (i(6)A), leading to the formation of 2-methylthio-N6-(dimethylallyl)adenosine (ms(2)i(6)A) at position 37 in tRNAs that read codons beginning with uridine. In Pseudoalteromonas translucida (strain TAC 125), this protein is tRNA-2-methylthio-N(6)-dimethylallyladenosine synthase.